Here is a 288-residue protein sequence, read N- to C-terminus: Protoheme IX farnesyltransferase 2 (288 aa).

A run of 9 helical transmembrane segments spans residues 8–28, 36–56, 85–105, 108–128, 131–151, 152–172, 211–231, 233–252, and 267–287; these read ITKPGIIFGNLISVAAGFFLA, LMLFLTTLAGVGLVIASGCVV, VAFVYALAMLLLGTALLFQLV, LSAVVVLLGYVYYVFFYTMWY, NSVYGTLVGSISGAVPPLVGY, LAVTNFISLEAILLFTMFCLW, AYVVAFGAVSLGLFLLGEAGY, YLAVAAVVCLMWTKVTFRSI, and VSLLVVMGISGVLGVELIPLA.

Belongs to the UbiA prenyltransferase family. Protoheme IX farnesyltransferase subfamily.

The protein localises to the cell inner membrane. It catalyses the reaction heme b + (2E,6E)-farnesyl diphosphate + H2O = Fe(II)-heme o + diphosphate. It functions in the pathway porphyrin-containing compound metabolism; heme O biosynthesis; heme O from protoheme: step 1/1. Its function is as follows. Converts heme B (protoheme IX) to heme O by substitution of the vinyl group on carbon 2 of heme B porphyrin ring with a hydroxyethyl farnesyl side group. In Vibrio parahaemolyticus serotype O3:K6 (strain RIMD 2210633), this protein is Protoheme IX farnesyltransferase 2.